The following is a 531-amino-acid chain: 4-hydroxyphenylacetaldehyde oxime monooxygenase (531 aa).

Residues 18-38 form a helical membrane-spanning segment; that stretch reads WQTCLLVLLPVLLVSYYLLTS. Residues Arg-122, Arg-151, Arg-466, and Cys-468 each contribute to the heme b site.

This sequence belongs to the cytochrome P450 family. Requires heme b as cofactor.

Its subcellular location is the endoplasmic reticulum membrane. The catalysed reaction is (E)-4-hydroxyphenylacetaldehyde oxime + reduced [NADPH--hemoprotein reductase] + O2 = (S)-4-hydroxymandelonitrile + oxidized [NADPH--hemoprotein reductase] + 2 H2O + H(+). It carries out the reaction (E)-4-hydroxyphenylacetaldehyde oxime = (Z)-(4-hydroxyphenyl)acetaldehyde oxime. It catalyses the reaction (Z)-(4-hydroxyphenyl)acetaldehyde oxime = 4-hydroxyphenylacetonitrile + H2O. The enzyme catalyses 4-hydroxyphenylacetonitrile + reduced [NADPH--hemoprotein reductase] + O2 = (S)-4-hydroxymandelonitrile + oxidized [NADPH--hemoprotein reductase] + H2O + H(+). Its pathway is secondary metabolite biosynthesis; dhurrin biosynthesis; dhurrin from L-tyrosine: step 2/3. In terms of biological role, cytochrome P450 involved in the biosynthesis of the cyanogenic glucoside dhurrin. Catalyzes the conversion of p-hydroxyphenylacetaldoxime to p-hydroxymandelonitrile via three different and successive activities: isomerization of the (E) isomer to the (Z) isomer of p-hydroxyphenylacetaldoxime, followed by dehydration of the oxime to the corresponding nitrile, and C-hydroxylation of the nitrile to produce p-hydroxymandelonitrile. The polypeptide is 4-hydroxyphenylacetaldehyde oxime monooxygenase (Sorghum bicolor (Sorghum)).